We begin with the raw amino-acid sequence, 108 residues long: Thiosulfate sulfurtransferase GlpE (108 aa).

Positions V17 to T105 constitute a Rhodanese domain. C65 acts as the Cysteine persulfide intermediate in catalysis.

The protein belongs to the GlpE family.

The protein resides in the cytoplasm. The enzyme catalyses thiosulfate + hydrogen cyanide = thiocyanate + sulfite + 2 H(+). It catalyses the reaction thiosulfate + [thioredoxin]-dithiol = [thioredoxin]-disulfide + hydrogen sulfide + sulfite + 2 H(+). Transferase that catalyzes the transfer of sulfur from thiosulfate to thiophilic acceptors such as cyanide or dithiols. May function in a CysM-independent thiosulfate assimilation pathway by catalyzing the conversion of thiosulfate to sulfite, which can then be used for L-cysteine biosynthesis. In Proteus mirabilis (strain HI4320), this protein is Thiosulfate sulfurtransferase GlpE.